Here is a 608-residue protein sequence, read N- to C-terminus: Threonine--tRNA ligase (608 aa).

The interval 1 to 144 (MRILLIHSDY…SRTITAEEEE (144 aa)) is editing domain. Residues 195–489 (PHVKLMREKE…ELDEKAPMLP (295 aa)) are catalytic. The Zn(2+) site is built by cysteine 286, histidine 338, and histidine 459.

The protein belongs to the class-II aminoacyl-tRNA synthetase family. In terms of assembly, homodimer. Zn(2+) is required as a cofactor.

It is found in the cytoplasm. The enzyme catalyses tRNA(Thr) + L-threonine + ATP = L-threonyl-tRNA(Thr) + AMP + diphosphate + H(+). Functionally, catalyzes the attachment of threonine to tRNA(Thr) in a two-step reaction: L-threonine is first activated by ATP to form Thr-AMP and then transferred to the acceptor end of tRNA(Thr). Also edits incorrectly charged L-seryl-tRNA(Thr). The sequence is that of Threonine--tRNA ligase from Methanobrevibacter smithii (strain ATCC 35061 / DSM 861 / OCM 144 / PS).